The sequence spans 388 residues: Xylose isomerase (388 aa).

Active-site residues include His54 and Asp57. Residues Glu181, Glu217, His220, Asp245, Asp255, Asp257, and Asp287 each coordinate Mg(2+).

The protein belongs to the xylose isomerase family. Homotetramer. Requires Mg(2+) as cofactor.

Its subcellular location is the cytoplasm. It carries out the reaction alpha-D-xylose = alpha-D-xylulofuranose. This is Xylose isomerase from Streptomyces corchorusii (Streptomyces chibaensis).